Reading from the N-terminus, the 231-residue chain is MPIPNNPGAGENAFDPVFVKDDDGYDLDSFMIPAHYKKYLTKVLVPNGVIKNRIEKLAYDIKKVYNNEEFHILCLLKGSRGFFTALLKHLSRIHNYSAVEMSKPLFGEHYVRVKSYCNDQSTGTLEIVSEDLSCLKGKHVLIVEDIIDTGKTLVKFCEYLKKFEIKTVAIACLFIKRTPLWNGFKADFVGFSIPDHFVVGYSLDYNEIFRDLDHCCLVNDEGKKKYKATSL.

Residues K77, 144–152, K176, and D204 contribute to the GMP site; that span reads EDIIDTGKT. The Proton acceptor role is filled by D148. D204 serves as a coordination point for Mg(2+).

The protein belongs to the purine/pyrimidine phosphoribosyltransferase family. Homotetramer. Mg(2+) is required as a cofactor.

It localises to the cytoplasm. The enzyme catalyses IMP + diphosphate = hypoxanthine + 5-phospho-alpha-D-ribose 1-diphosphate. It catalyses the reaction GMP + diphosphate = guanine + 5-phospho-alpha-D-ribose 1-diphosphate. It carries out the reaction XMP + diphosphate = xanthine + 5-phospho-alpha-D-ribose 1-diphosphate. It participates in purine metabolism; GMP biosynthesis via salvage pathway; GMP from guanine: step 1/1. Its pathway is purine metabolism; IMP biosynthesis via salvage pathway; IMP from hypoxanthine: step 1/1. The protein operates within purine metabolism; XMP biosynthesis via salvage pathway; XMP from xanthine: step 1/1. Catalyzes the transfer of a ribosyl phosphate group from 5-phosphoribose 1-diphosphate to the N(9) of hypoxanthine, guanine or xanthine, leading to IMP, GMP and XMP, respectively. Plays a central role in the generation of purine nucleotides through the purine salvage pathway. The protein is Hypoxanthine-guanine-xanthine phosphoribosyltransferase (LACZ) of Plasmodium falciparum (isolate K1 / Thailand).